Reading from the N-terminus, the 359-residue chain is Holliday junction branch migration complex subunit RuvB (359 aa).

Positions 1-10 (MPEHDPHQEN) are enriched in basic and acidic residues. Residues 1–20 (MPEHDPHQENRTVSSVRLED) form a disordered region. Residues 4–188 (HDPHQENRTV…FGIPLRLIFY (185 aa)) form a large ATPase domain (RuvB-L) region. Residues leucine 27, arginine 28, glycine 69, lysine 72, threonine 73, threonine 74, 135-137 (EDF), arginine 178, tyrosine 188, and arginine 225 contribute to the ATP site. Threonine 73 is a Mg(2+) binding site. The segment at 189-259 (TASELELIVS…TADAALQRLE (71 aa)) is small ATPAse domain (RuvB-S). Residues 262 to 359 (SLGLDAMDRR…LLHRDGSADE (98 aa)) are head domain (RuvB-H). The DNA site is built by arginine 298, arginine 317, and arginine 322.

It belongs to the RuvB family. As to quaternary structure, homohexamer. Forms an RuvA(8)-RuvB(12)-Holliday junction (HJ) complex. HJ DNA is sandwiched between 2 RuvA tetramers; dsDNA enters through RuvA and exits via RuvB. An RuvB hexamer assembles on each DNA strand where it exits the tetramer. Each RuvB hexamer is contacted by two RuvA subunits (via domain III) on 2 adjacent RuvB subunits; this complex drives branch migration. In the full resolvosome a probable DNA-RuvA(4)-RuvB(12)-RuvC(2) complex forms which resolves the HJ.

The protein resides in the cytoplasm. It carries out the reaction ATP + H2O = ADP + phosphate + H(+). In terms of biological role, the RuvA-RuvB-RuvC complex processes Holliday junction (HJ) DNA during genetic recombination and DNA repair, while the RuvA-RuvB complex plays an important role in the rescue of blocked DNA replication forks via replication fork reversal (RFR). RuvA specifically binds to HJ cruciform DNA, conferring on it an open structure. The RuvB hexamer acts as an ATP-dependent pump, pulling dsDNA into and through the RuvAB complex. RuvB forms 2 homohexamers on either side of HJ DNA bound by 1 or 2 RuvA tetramers; 4 subunits per hexamer contact DNA at a time. Coordinated motions by a converter formed by DNA-disengaged RuvB subunits stimulates ATP hydrolysis and nucleotide exchange. Immobilization of the converter enables RuvB to convert the ATP-contained energy into a lever motion, pulling 2 nucleotides of DNA out of the RuvA tetramer per ATP hydrolyzed, thus driving DNA branch migration. The RuvB motors rotate together with the DNA substrate, which together with the progressing nucleotide cycle form the mechanistic basis for DNA recombination by continuous HJ branch migration. Branch migration allows RuvC to scan DNA until it finds its consensus sequence, where it cleaves and resolves cruciform DNA. The chain is Holliday junction branch migration complex subunit RuvB from Granulibacter bethesdensis (strain ATCC BAA-1260 / CGDNIH1).